Reading from the N-terminus, the 118-residue chain is Small ribosomal subunit protein uS13 (118 aa).

The segment at 92 to 118 (RKGLPVRGQRTKTNARTRKGPRKPIRK) is disordered.

This sequence belongs to the universal ribosomal protein uS13 family. In terms of assembly, part of the 30S ribosomal subunit. Forms a loose heterodimer with protein S19. Forms two bridges to the 50S subunit in the 70S ribosome.

Functionally, located at the top of the head of the 30S subunit, it contacts several helices of the 16S rRNA. In the 70S ribosome it contacts the 23S rRNA (bridge B1a) and protein L5 of the 50S subunit (bridge B1b), connecting the 2 subunits; these bridges are implicated in subunit movement. Contacts the tRNAs in the A and P-sites. In Pseudomonas putida (strain ATCC 700007 / DSM 6899 / JCM 31910 / BCRC 17059 / LMG 24140 / F1), this protein is Small ribosomal subunit protein uS13.